Here is a 529-residue protein sequence, read N- to C-terminus: UDP-glucuronosyltransferase 2B23 (529 aa).

The signal sequence occupies residues 1 to 24 (MSVKWTSVILLIQLSFYFSSGSCG). 2 N-linked (GlcNAc...) asparagine glycosylation sites follow: Asn-67 and Asn-68. Residues 494–514 (IGFLLACVATVIFIIMKCCLF) traverse the membrane as a helical segment.

The protein belongs to the UDP-glycosyltransferase family. In terms of tissue distribution, expressed in several tissues, including the prostate, mammary gland, epididymis, testis and ovary.

Its subcellular location is the microsome membrane. The protein localises to the endoplasmic reticulum membrane. The enzyme catalyses glucuronate acceptor + UDP-alpha-D-glucuronate = acceptor beta-D-glucuronoside + UDP + H(+). In terms of biological role, UDPGTs are of major importance in the conjugation and subsequent elimination of potentially toxic xenobiotics and endogenous compounds. This isozyme has glucuronidating capacity on 6 steroids and the bile acid, hyodeoxycholic acid. May potentially play an important role in estrogen and androgen catabolism in peripheral steroid target tissues. The chain is UDP-glucuronosyltransferase 2B23 (UGT2B23) from Macaca fascicularis (Crab-eating macaque).